The sequence spans 443 residues: FAD-dependent monooxygenase orf3 (443 aa).

A helical transmembrane segment spans residues 5–25; the sequence is SIEVAIIGAGITGITLALGLL. Glu-35 and Gly-48 together coordinate FAD. N-linked (GlcNAc...) asparagine glycans are attached at residues Asn-75 and Asn-87. Arg-116 lines the FAD pocket. Arg-199 is an active-site residue. FAD is bound by residues Asp-315 and Ala-328.

The protein belongs to the paxM FAD-dependent monooxygenase family. FAD serves as cofactor.

It is found in the membrane. It participates in secondary metabolite biosynthesis. In terms of biological role, FAD-dependent monooxygenase; part of the gene cluster that mediates the biosynthesis of nigerpyrone and its derivatives carbonarone A and pestalamide A. The biosynthesis pathway begins with the polyketide assembly by epaA to form phenylacetyl triketide precursor from successive condensation of two malonyl-CoA, presumably with one phenylacetyl-CoA starter unit produced by the phenylacetyl-CoA ligase epaB. For the nigerpyrone biosynthesis, the reactive polyketide chain is released as an aldehyde through the R-domain. A nonenzymatic cyclization and dehydration may create nigerpyrone. For the biosynthesis of carbonarone A and pestalamide A, an extra methyl group is added through the C-methyltransferase domain. Several further steps involving the dehydrogenase orf1, the cytochrome P450 monooxygenase orf2 and the FAD-dependent monooxygenase orf3 are required to form a carbonarone A precursor which is converted to carbonarone A via cyclization. The O-acetyltransferase epaC could catalyze the transfer of 2-methylsuccinyl-CoA, a common intermediate in the ethylmalonyl-CoA pathway, to generate the final product pestalamide A. This chain is FAD-dependent monooxygenase orf3, found in Aspergillus niger (strain ATCC MYA-4892 / CBS 513.88 / FGSC A1513).